An 838-amino-acid chain; its full sequence is U1 SNP1-associating protein 1 (838 aa).

At 1–536 (MSEYLAQTPC…VRPLRNSFPL (536 aa)) the chain is on the cytoplasmic side. The tract at residues 31–240 (HPLSTVGRLL…DFAPAHNSFF (210 aa)) is required for ERAD-L function. The 60-residue stretch at 259–318 (ERFVLEFISDATLSITQMNVKPDTTVKQVKDFICSVYTHSLNLRRNDIKLIYKGQLLHEN) folds into the Ubiquitin-like domain. Residues 319–418 (NFAGNSSKIS…VPTDELYRKC (100 aa)) form an important for HRD1 oligomer formation region. Residues 345–535 (QEYTESGPGF…VVRPLRNSFP (191 aa)) form an interaction with HRD1 region. 3 positions are modified to phosphoserine: serine 374, serine 376, and serine 379. The interval 437 to 490 (SSYLSVIKGDYGEIKIPISSNDYRINGDNILLSPSAIEQLESALNFKIERPRDS) is required for ERAD-L function and HRD1 oligomer formation. Residues 537 to 559 (LLVLIRTFYLIGYNSLVPFFIIL) form a helical membrane-spanning segment. Topologically, residues 560-563 (EFGS) are extracellular. A helical transmembrane segment spans residues 564 to 583 (FLPWKYIILLSLLFIFRTVW). Topologically, residues 584-838 (NTQEVWNLWR…QPHLYIPDED (255 aa)) are cytoplasmic. The tract at residues 584-838 (NTQEVWNLWR…QPHLYIPDED (255 aa)) is interaction with DER1. The tract at residues 795-838 (ARDREQPAPSAQQQENEDEALIIPDEEEPTATGAQPHLYIPDED) is disordered. The segment covering 809–823 (ENEDEALIIPDEEEP) has biased composition (acidic residues).

As to quaternary structure, component of the HRD1 ubiquitin ligase complex which contains the E3 ligase HRD1, its cofactors HRD3, USA1 and DER1, substrate recruiting factor YOS9 and CDC48-binding protein UBX2. Within the complex, interacts directly with HRD1 (via N-terminus) and DER1 (via C-terminus) and indirectly with HRD3. In ERAD-L, HRD3 and YOS9 jointly bind misfolded glycoproteins in the endoplasmic reticulum (ER) lumen. Movement of ERAD-L substrates through the ER membrane is facilitated by HRD1 and DER1 which have lateral gates facing each other and which distort the membrane region between the lateral gates, making it much thinner than a normal phospholipid bilayer. Substrates insert into the membrane as a hairpin loop with one strand interacting with DER1 and the other with HRD1. The HRD1 complex interacts with the heterotrimeric CDC48-NPL4-UFD1 ATPase complex which is recruited by UBX2 via its interaction with CDC48 and which moves ubiquitinated substrates to the cytosol for targeting to the proteasome.

The protein localises to the endoplasmic reticulum membrane. Scaffold protein of the endoplasmic reticulum-associated degradation (ERAD) (also known as endoplasmic reticulum quality control, ERQC) pathway involved in ubiquitin-dependent degradation of misfolded endoplasmic reticulum proteins. Component of the HRD1 ubiquitin ligase complex, which is part of the ERAD-L and ERAD-M pathways responsible for the rapid degradation of soluble lumenal and membrane proteins with misfolded lumenal domains (ERAD-L), or ER-membrane proteins with misfolded transmembrane domains (ERAD-M). Has multiple functions in ERAD including recruitment of DER1 to the HRD1 ubiquitin ligase, and regulation of HRD1 activity. Involved in oligomerization of HRD1 and in HRD1 autoubiquitination and degradation. The chain is U1 SNP1-associating protein 1 (USA1) from Saccharomyces cerevisiae (strain ATCC 204508 / S288c) (Baker's yeast).